The sequence spans 457 residues: MKIYNTLSGKLEEFVPLENDKVKMYVCGITPQSEPHIGHAMSYINFDVIRRYLTYKGYRVKYIQNFTDIDDKIIAKANAQGIEPSTLAERNIGVFLDAMAALNITPADYYPRATQEVPKIIEIVSGLIDKGYAYAVDGSVYLRVQKVDGYGKLSHRTLEQMMAGARVEIDEEKEYPMDFALWKATKPGEPSWESPWGLGRPGWHIECSAMSLRYLGEQIDIHGGGQDLIFPHHENEIAQSECFSGVKPFVKYWLHNGLLKLGEEKMSKSLGNLVTIKEALSRYSADALRIFVLSSSYRNPLTYSEEALEAAEKGAERLRQTAARKDNPQFKETTVDTKAYRERFTQYMDNDFNTSAALATIFDLSRELNRIEGEAGKSTDGQKLFKELADILGLSLIVAESKTGTDVAPFIELLIELRKDLRVAKQYQLADKIRTSLDTAGILLEDSAGGTVWKVKK.

Cysteine 27 provides a ligand contact to Zn(2+). The short motif at 29–39 (ITPQSEPHIGH) is the 'HIGH' region element. Zn(2+) contacts are provided by cysteine 207, histidine 232, and glutamate 236. The short motif at 265 to 269 (KMSKS) is the 'KMSKS' region element. Lysine 268 is an ATP binding site.

The protein belongs to the class-I aminoacyl-tRNA synthetase family. Monomer. Zn(2+) is required as a cofactor.

Its subcellular location is the cytoplasm. The catalysed reaction is tRNA(Cys) + L-cysteine + ATP = L-cysteinyl-tRNA(Cys) + AMP + diphosphate. The sequence is that of Cysteine--tRNA ligase from Dehalococcoides mccartyi (strain ATCC BAA-2100 / JCM 16839 / KCTC 5957 / BAV1).